Consider the following 66-residue polypeptide: Alpha-actitoxin-Ms11a-1 (66 aa).

A signal peptide spans 1–24 (MASKIFFVLAVFLVMSAVLPESFA). 3 disulfides stabilise this stretch: C26–C41, C33–C46, and C40–C61.

The protein localises to the secreted. The protein resides in the nematocyst. Alpha-toxins act on postsynaptic membranes, they bind to the nicotinic acetylcholine receptors (nAChR) and thus inhibit them. This toxin competes with alpha-bungarotoxin for binding to orthosteric sites on muscle-type T.carlifornicus (IC(50)=408 nM) and human alpha-7/CHRNA7 nAChRs (IC(50)=14.16 uM). The chain is Alpha-actitoxin-Ms11a-1 from Metridium senile (Brown sea anemone).